Reading from the N-terminus, the 431-residue chain is Tol-Pal system protein TolB (431 aa).

The signal sequence occupies residues Met1 to Ser19.

The protein belongs to the TolB family. As to quaternary structure, the Tol-Pal system is composed of five core proteins: the inner membrane proteins TolA, TolQ and TolR, the periplasmic protein TolB and the outer membrane protein Pal. They form a network linking the inner and outer membranes and the peptidoglycan layer.

The protein resides in the periplasm. Part of the Tol-Pal system, which plays a role in outer membrane invagination during cell division and is important for maintaining outer membrane integrity. TolB occupies a key intermediary position in the Tol-Pal system because it communicates directly with both membrane-embedded components, Pal in the outer membrane and TolA in the inner membrane. The sequence is that of Tol-Pal system protein TolB from Wigglesworthia glossinidia brevipalpis.